A 279-amino-acid chain; its full sequence is MAESFVRLEHVFYKYEDTEKYAVKDVSISAQKGEWVALVGHNGSGKSTIAKLLNGLLFPEDGLIKIGHFVLSEKNIWEIRRQVGMVFQNPDNQFVGATVQDDVAFGLENHGVPHDTMVERVESALNEVGMQSYALHEPARLSGGQKQRVAIAGVLALQPDVIILDEATSMLDPRGRAEVMETIRIMREQEDITVISITHDLDEVLFADRVIVMNNGEIHSEGTPKEIFEQADAMRAIGLGVPFIIELQEKLVAGGFETGSTVLSEGALLDQLWKLNSNN.

Positions 6–240 constitute an ABC transporter domain; that stretch reads VRLEHVFYKY…ADAMRAIGLG (235 aa). 40 to 47 lines the ATP pocket; it reads GHNGSGKS.

It belongs to the ABC transporter superfamily. Energy-coupling factor EcfA family. As to quaternary structure, forms a stable energy-coupling factor (ECF) transporter complex composed of 2 membrane-embedded substrate-binding proteins (S component), 2 ATP-binding proteins (A component) and 2 transmembrane proteins (T component).

The protein resides in the cell membrane. ATP-binding (A) component of a common energy-coupling factor (ECF) ABC-transporter complex. Unlike classic ABC transporters this ECF transporter provides the energy necessary to transport a number of different substrates. The chain is Energy-coupling factor transporter ATP-binding protein EcfA1 from Listeria innocua serovar 6a (strain ATCC BAA-680 / CLIP 11262).